Reading from the N-terminus, the 345-residue chain is tRNA N6-adenosine threonylcarbamoyltransferase (345 aa).

Positions 109 and 113 each coordinate Fe cation. Residues 136-140, aspartate 169, glycine 182, aspartate 186, and asparagine 284 each bind substrate; that span reads TVSGG. Residue aspartate 312 coordinates Fe cation.

Belongs to the KAE1 / TsaD family. Fe(2+) is required as a cofactor.

It localises to the cytoplasm. It carries out the reaction L-threonylcarbamoyladenylate + adenosine(37) in tRNA = N(6)-L-threonylcarbamoyladenosine(37) in tRNA + AMP + H(+). Functionally, required for the formation of a threonylcarbamoyl group on adenosine at position 37 (t(6)A37) in tRNAs that read codons beginning with adenine. Is involved in the transfer of the threonylcarbamoyl moiety of threonylcarbamoyl-AMP (TC-AMP) to the N6 group of A37, together with TsaE and TsaB. TsaD likely plays a direct catalytic role in this reaction. The chain is tRNA N6-adenosine threonylcarbamoyltransferase from Prosthecochloris aestuarii (strain DSM 271 / SK 413).